Reading from the N-terminus, the 207-residue chain is Protein FAM177A1 (207 aa).

At M1 the chain carries N-acetylmethionine. S65 bears the Phosphoserine mark. T66 is subject to Phosphothreonine. Residues 131 to 170 (IDEYYRMKKEEEEEEEENRMSEEAERQYQQNKLQADSIVQ) adopt a coiled-coil conformation. The segment at 142 to 176 (EEEEEENRMSEEAERQYQQNKLQADSIVQTDQPET) is disordered. Residues 157-176 (QYQQNKLQADSIVQTDQPET) show a composition bias toward polar residues.

This sequence belongs to the FAM177 family.

The sequence is that of Protein FAM177A1 (Fam177a1) from Mus musculus (Mouse).